A 264-amino-acid polypeptide reads, in one-letter code: S-adenosylmethionine decarboxylase proenzyme (264 aa).

Serine 112 serves as the catalytic Schiff-base intermediate with substrate; via pyruvic acid. Position 112 is a pyruvic acid (Ser); by autocatalysis (serine 112). Histidine 117 (proton acceptor; for processing activity) is an active-site residue. The active-site Proton donor; for catalytic activity is the cysteine 140.

Belongs to the prokaryotic AdoMetDC family. Type 2 subfamily. In terms of assembly, heterooctamer of four alpha and four beta chains arranged as a tetramer of alpha/beta heterodimers. The cofactor is pyruvate. In terms of processing, is synthesized initially as an inactive proenzyme. Formation of the active enzyme involves a self-maturation process in which the active site pyruvoyl group is generated from an internal serine residue via an autocatalytic post-translational modification. Two non-identical subunits are generated from the proenzyme in this reaction, and the pyruvate is formed at the N-terminus of the alpha chain, which is derived from the carboxyl end of the proenzyme. The post-translation cleavage follows an unusual pathway, termed non-hydrolytic serinolysis, in which the side chain hydroxyl group of the serine supplies its oxygen atom to form the C-terminus of the beta chain, while the remainder of the serine residue undergoes an oxidative deamination to produce ammonia and the pyruvoyl group blocking the N-terminus of the alpha chain.

The enzyme catalyses S-adenosyl-L-methionine + H(+) = S-adenosyl 3-(methylsulfanyl)propylamine + CO2. The protein operates within amine and polyamine biosynthesis; S-adenosylmethioninamine biosynthesis; S-adenosylmethioninamine from S-adenosyl-L-methionine: step 1/1. Its function is as follows. Catalyzes the decarboxylation of S-adenosylmethionine to S-adenosylmethioninamine (dcAdoMet), the propylamine donor required for the synthesis of the polyamines spermine and spermidine from the diamine putrescine. The polypeptide is S-adenosylmethionine decarboxylase proenzyme (Yersinia pseudotuberculosis serotype O:1b (strain IP 31758)).